The sequence spans 569 residues: Laccase-14 (569 aa).

The first 33 residues, 1-33, serve as a signal peptide directing secretion; it reads MEFKLNIPNTIIKTLQTIVFFLFVLLAFQIAEA. 2 Plastocyanin-like domains span residues 41-157 and 167-320; these read KIKS…PKRG and REIP…YKGD. N-linked (GlcNAc...) asparagine glycosylation occurs at Asn87. Cu cation contacts are provided by His91, His93, His136, and His138. Asn190, Asn249, Asn336, Asn374, Asn395, Asn430, and Asn452 each carry an N-linked (GlcNAc...) asparagine glycan. One can recognise a Plastocyanin-like 3 domain in the interval 420 to 553; sequence DFPRNPPTKF…NTVFIVKDGP (134 aa). 8 residues coordinate Cu cation: His470, His473, His475, His532, Cys533, His534, His538, and Met543.

The protein belongs to the multicopper oxidase family. Requires Cu cation as cofactor. As to expression, expressed at low levels in flowers and siliques.

It is found in the secreted. Its subcellular location is the extracellular space. The protein resides in the apoplast. It carries out the reaction 4 hydroquinone + O2 = 4 benzosemiquinone + 2 H2O. Functionally, lignin degradation and detoxification of lignin-derived products. This chain is Laccase-14 (LAC14), found in Arabidopsis thaliana (Mouse-ear cress).